Here is a 658-residue protein sequence, read N- to C-terminus: D-ornithine--citrate ligase (658 aa).

Belongs to the IucA/IucC family.

The catalysed reaction is D-ornithine + citrate + ATP = N(5)-[(S)-citryl]-D-ornithine + AMP + diphosphate + H(+). It functions in the pathway siderophore biosynthesis. Its function is as follows. Involved in the biosynthesis of the siderophore staphyloferrin A. Catalyzes the ATP-dependent condensation of D-ornithine and citrate to form a citryl-D-ornithine intermediate. The protein is D-ornithine--citrate ligase of Staphylococcus aureus (strain NCTC 8325 / PS 47).